We begin with the raw amino-acid sequence, 75 residues long: Kappa-thalatoxin-Tas2a (75 aa).

Positions 1 to 22 (MKFQMIAAVLLIAFCLSVVVTA) are cleaved as a signal peptide. A propeptide spanning residues 23 to 40 (RMELQDDEEMKNGSFQKR) is cleaved from the precursor. One can recognise a ShKT domain in the interval 43–75 (CIDTIPKSRCTAFQCKHSMKYRLSFCRKTCGTC). Intrachain disulfides connect C43-C75, C52-C68, and C57-C72.

Belongs to the sea anemone type 1 potassium channel toxin family. Type 1a subfamily.

It localises to the secreted. It is found in the nematocyst. In terms of biological role, inhibits voltage-gated potassium channels (Kv) with higher potency for Kv1.1/KCNA1 and Kv1.3/KCNA3 (IC(50)=3.4 nM). In Thalassianthus aster (Fuzzy-tipped anemone), this protein is Kappa-thalatoxin-Tas2a.